Here is a 71-residue protein sequence, read N- to C-terminus: Small ribosomal subunit protein bS18 (71 aa).

The protein belongs to the bacterial ribosomal protein bS18 family. In terms of assembly, part of the 30S ribosomal subunit. Forms a tight heterodimer with protein bS6.

Functionally, binds as a heterodimer with protein bS6 to the central domain of the 16S rRNA, where it helps stabilize the platform of the 30S subunit. In Dichelobacter nodosus (strain VCS1703A), this protein is Small ribosomal subunit protein bS18.